The chain runs to 133 residues: Glycine cleavage system H protein (133 aa).

The Lipoyl-binding domain occupies threonine 30–lysine 112. Lysine 71 is modified (N6-lipoyllysine).

Belongs to the GcvH family. In terms of assembly, the glycine cleavage system is composed of four proteins: P, T, L and H. (R)-lipoate serves as cofactor.

Its function is as follows. The glycine cleavage system catalyzes the degradation of glycine. The H protein shuttles the methylamine group of glycine from the P protein to the T protein. This Neisseria gonorrhoeae (strain ATCC 700825 / FA 1090) protein is Glycine cleavage system H protein.